The chain runs to 601 residues: Testis-specific gene 10 protein (601 aa).

The span at 1 to 10 (MMRSRSKSPR) shows a compositional bias: basic residues. 2 disordered regions span residues 1-20 (MMRS…RGAN) and 563-588 (VSST…DRGL). The segment at 459–592 (QMTNERISMQ…SPDRGLDRSL (134 aa)) is interaction with HIF1A. The segment covering 563–573 (VSSTMKPNTKC) has biased composition (polar residues). The span at 574-588 (HSPERAHHRSPDRGL) shows a compositional bias: basic and acidic residues. At Ser-591 the chain carries Phosphoserine.

It belongs to the CEP135/TSGA10 family. As to quaternary structure, interacts with HIF1A. In terms of processing, processed into N-terminal 27-kDa and C-terminal 55-kDa fragments.

The protein localises to the cytoplasm. It localises to the cytoskeleton. Its subcellular location is the microtubule organizing center. It is found in the centrosome. The protein resides in the centriole. Functionally, plays a role in spermatogenesis. When overexpressed, prevents nuclear localization of HIF1A. The protein is Testis-specific gene 10 protein (TSGA10) of Macaca fascicularis (Crab-eating macaque).